The chain runs to 214 residues: Large ribosomal subunit protein uL16 (214 aa).

Arg32 carries the citrulline modification. Lys175 is covalently cross-linked (Glycyl lysine isopeptide (Lys-Gly) (interchain with G-Cter in SUMO2)). A Glycyl lysine isopeptide (Lys-Gly) (interchain with G-Cter in ubiquitin) cross-link involves residue Lys188.

Belongs to the universal ribosomal protein uL16 family. As to quaternary structure, component of the large ribosomal subunit. Mature ribosomes consist of a small (40S) and a large (60S) subunit. The 40S subunit contains about 33 different proteins and 1 molecule of RNA (18S). The 60S subunit contains about 49 different proteins and 3 molecules of RNA (28S, 5.8S and 5S). Post-translationally, citrullinated by PADI4. Ufmylated by UFL1.

The protein localises to the cytoplasm. Component of the large ribosomal subunit. Plays a role in the formation of actively translating ribosomes. May play a role in the embryonic brain development. The sequence is that of Large ribosomal subunit protein uL16 (RPL10) from Oryctolagus cuniculus (Rabbit).